A 316-amino-acid polypeptide reads, in one-letter code: ATP synthase gamma chain (316 aa).

This sequence belongs to the ATPase gamma chain family. As to quaternary structure, F-type ATPases have 2 components, CF(1) - the catalytic core - and CF(0) - the membrane proton channel. CF(1) has five subunits: alpha(3), beta(3), gamma(1), delta(1), epsilon(1). CF(0) has three main subunits: a, b and c.

Its subcellular location is the cellular thylakoid membrane. In terms of biological role, produces ATP from ADP in the presence of a proton gradient across the membrane. The gamma chain is believed to be important in regulating ATPase activity and the flow of protons through the CF(0) complex. This chain is ATP synthase gamma chain, found in Prochlorococcus marinus (strain MIT 9313).